The following is a 103-amino-acid chain: UPF0235 protein Dole_0289 (103 aa).

Belongs to the UPF0235 family.

The chain is UPF0235 protein Dole_0289 from Desulfosudis oleivorans (strain DSM 6200 / JCM 39069 / Hxd3) (Desulfococcus oleovorans).